The following is a 245-amino-acid chain: 5-oxoprolinase subunit A (245 aa).

Belongs to the LamB/PxpA family. Forms a complex composed of PxpA, PxpB and PxpC.

It catalyses the reaction 5-oxo-L-proline + ATP + 2 H2O = L-glutamate + ADP + phosphate + H(+). Its function is as follows. Catalyzes the cleavage of 5-oxoproline to form L-glutamate coupled to the hydrolysis of ATP to ADP and inorganic phosphate. The chain is 5-oxoprolinase subunit A from Neisseria meningitidis serogroup A / serotype 4A (strain DSM 15465 / Z2491).